A 284-amino-acid polypeptide reads, in one-letter code: MEMO1 family protein STK_20620 (284 aa).

The protein belongs to the MEMO1 family.

The polypeptide is MEMO1 family protein STK_20620 (Sulfurisphaera tokodaii (strain DSM 16993 / JCM 10545 / NBRC 100140 / 7) (Sulfolobus tokodaii)).